A 269-amino-acid chain; its full sequence is MERYQQLFDRLAARKEGAFVPFVTLGDPSPEQSLQIIDALVEGGADALELGIPFSDPLADGPTIQSATLRAFASGTTPDQCFEMLAAVRQKYPDLPIGLLMYANLVFSRGVDEFYARCAAVGVDSVLVADVPVEESAPFRQAAMRHNVAPIFICPPNADDDLLRQIASYGRGYTYLLSRAGVTGAENRAALPLNHLINKLTEYHAAPPLQGFGISEPAQVKAAIEAGAAGAISGSAIVKIIENNLNDRAAMLESLKTFVRQLKAASLPA.

Catalysis depends on proton acceptor residues Glu-49 and Asp-60.

Belongs to the TrpA family. Tetramer of two alpha and two beta chains.

It carries out the reaction (1S,2R)-1-C-(indol-3-yl)glycerol 3-phosphate + L-serine = D-glyceraldehyde 3-phosphate + L-tryptophan + H2O. Its pathway is amino-acid biosynthesis; L-tryptophan biosynthesis; L-tryptophan from chorismate: step 5/5. Functionally, the alpha subunit is responsible for the aldol cleavage of indoleglycerol phosphate to indole and glyceraldehyde 3-phosphate. In Cronobacter sakazakii (strain ATCC BAA-894) (Enterobacter sakazakii), this protein is Tryptophan synthase alpha chain.